Reading from the N-terminus, the 261-residue chain is MTTREDGRADDELRTVKITRGFTSHPAGSVLVEFGNTRVMCTASVEEGVPRWRKGSGLGWLTAEYAMLPAATHTRSGRESVKGKVGGRTQEISRLIGRSLRACIDLAAIGENTIALDCDVLQADGGTRTAAVTGAYVALVDAVTYLRAADLLSDPQPISCGIAAVSVGVVDGRVRLDLPYEEDSRAEVDMNVVATDTGTLVEIQGTGEGATFPRSTLDKLLDSALAGCEQLFEIQRQALAEPYPGVLPEPKNPEPKKKFGA.

Phosphate contacts are provided by residues R88 and 126–128 (GTR). Residues 242 to 261 (PYPGVLPEPKNPEPKKKFGA) form a disordered region. Residues 251–261 (KNPEPKKKFGA) are compositionally biased toward basic and acidic residues.

Belongs to the RNase PH family. Homohexameric ring arranged as a trimer of dimers.

The enzyme catalyses tRNA(n+1) + phosphate = tRNA(n) + a ribonucleoside 5'-diphosphate. Phosphorolytic 3'-5' exoribonuclease that plays an important role in tRNA 3'-end maturation. Removes nucleotide residues following the 3'-CCA terminus of tRNAs; can also add nucleotides to the ends of RNA molecules by using nucleoside diphosphates as substrates, but this may not be physiologically important. Probably plays a role in initiation of 16S rRNA degradation (leading to ribosome degradation) during starvation. The chain is Ribonuclease PH from Rhodococcus erythropolis (strain PR4 / NBRC 100887).